Reading from the N-terminus, the 480-residue chain is MVKICCIGAGYVGGPTMAVIALKCPAIEVVVVDISKPRVDAWNSDQLPIYEPGLDEVVKECRGRNLFFSTDVEKHVAEADIIFVSVNTPTKTRGLGAGKAADLTYWESAARMIADVSKSDKIVVEKSTVPVKTAEAIEKILTHNSKGINYQILSNPEFLAEGTAIEDLFKPDRVLIGGRETPEGKKAVQALKEVYAHWVPEDRIITTNLWSAELSKLAANAFLAQRISSVNAISALCEATGANVSEVAYAVGKDTRIGPKFLNASVGFGGSCFQKDILNLVYICECNGLPEVANYWKQVIKINDYQKSRFVNRVVASMFNTVSGKKIAVLGFAFKKDTGDTRETPAIDVCHGLLGDKAQISIYDPQVTEDQIQRDLSMAKFDWDHPRHLQPTSPTAFKQVSVVWDAYEATKGAHGLCILTEWDEFKTLDYQRIFDNMQKPAFVFDGRNVVDPEKLREIGFIVYSIGKPLDAWLKDMPAVA.

Residues 8–13 (GAGYVG), Asp33, Arg38, 86–90 (VNTPT), 127–128 (ST), and Glu161 contribute to the NAD(+) site. Substrate contacts are provided by residues 157-161 (EFLAE), 216-223 (KLAANAFL), and 256-269 (RIGP…VGFG). Cys272 acts as the Nucleophile in catalysis. 272-275 (CFQK) provides a ligand contact to NAD(+). A substrate-binding site is contributed by 334–335 (FK). Residue Arg342 participates in NAD(+) binding. Position 393 is a phosphoserine (Ser393). Arg447 lines the substrate pocket.

Belongs to the UDP-glucose/GDP-mannose dehydrogenase family.

It carries out the reaction UDP-alpha-D-glucose + 2 NAD(+) + H2O = UDP-alpha-D-glucuronate + 2 NADH + 3 H(+). It functions in the pathway nucleotide-sugar biosynthesis; UDP-alpha-D-glucuronate biosynthesis; UDP-alpha-D-glucuronate from UDP-alpha-D-glucose: step 1/1. Its function is as follows. Involved in the biosynthesis of UDP-glucuronic acid (UDP-GlcA), providing nucleotide sugars for cell-wall polymers. This Oryza sativa subsp. japonica (Rice) protein is UDP-glucose 6-dehydrogenase 5 (UGD5).